The chain runs to 298 residues: Ethanolamine ammonia-lyase small subunit (298 aa).

Residues Val210, Glu231, and Cys261 each contribute to the adenosylcob(III)alamin site.

This sequence belongs to the EutC family. As to quaternary structure, the basic unit is a heterodimer which dimerizes to form tetramers. The heterotetramers trimerize; 6 large subunits form a core ring with 6 small subunits projecting outwards. It depends on adenosylcob(III)alamin as a cofactor.

Its subcellular location is the bacterial microcompartment. The enzyme catalyses ethanolamine = acetaldehyde + NH4(+). It participates in amine and polyamine degradation; ethanolamine degradation. Catalyzes the deamination of various vicinal amino-alcohols to oxo compounds. Allows this organism to utilize ethanolamine as the sole source of nitrogen and carbon in the presence of external vitamin B12. The protein is Ethanolamine ammonia-lyase small subunit of Salmonella typhi.